The primary structure comprises 689 residues: Translation initiation factor IF-2 (689 aa).

A disordered region spans residues 70–107 (VRSKKNSNKKKKKGKGNQDKRQENFAGKQQAQTVETPD). The segment covering 71–84 (RSKKNSNKKKKKGK) has biased composition (basic residues). A tr-type G domain is found at 191–360 (ERPAVVTIMG…LLVSEVEEYK (170 aa)). Residues 200–207 (GHVDHGKT) form a G1 region. 200–207 (GHVDHGKT) is a binding site for GTP. The interval 225–229 (GITQH) is G2. A G3 region spans residues 246-249 (DTPG). GTP-binding positions include 246-250 (DTPGH) and 300-303 (NKMD). The segment at 300–303 (NKMD) is G4. The interval 336 to 338 (SAI) is G5.

Belongs to the TRAFAC class translation factor GTPase superfamily. Classic translation factor GTPase family. IF-2 subfamily.

It is found in the cytoplasm. One of the essential components for the initiation of protein synthesis. Protects formylmethionyl-tRNA from spontaneous hydrolysis and promotes its binding to the 30S ribosomal subunits. Also involved in the hydrolysis of GTP during the formation of the 70S ribosomal complex. This Bacillus cytotoxicus (strain DSM 22905 / CIP 110041 / 391-98 / NVH 391-98) protein is Translation initiation factor IF-2.